A 194-amino-acid polypeptide reads, in one-letter code: 2,4-dinitrotoluene dioxygenase system, small oxygenase component (194 aa).

Belongs to the bacterial ring-hydroxylating dioxygenase beta subunit family. In terms of assembly, the 2,4-dinitrotoluene dioxygenase (DNTDO) multicomponent enzyme system is composed of an electron transfer component and a dioxygenase component (iron sulfur protein (ISP)). The electron transfer component is composed of a ferredoxin reductase (DntAa) and a ferredoxin (DntAb), and the dioxygenase component is formed of a large alpha subunit (DntAc) and a small beta subunit (DntAd).

Its function is as follows. Component of the 2,4-dinitrotoluene dioxygenase (DNTDO) multicomponent enzyme system which catalyzes the incorporation of both atoms of molecular oxygen into 2,4-dinitrotoluene (DNT) to form 4-methyl-5-nitrocatechol (MNC) and nitrite. The beta subunit seems to have a structural role in the holoenzyme. Also able to convert naphthalene to cis-(1R,2S)-dihydroxy-1,2-dihydronaphthalene. In Burkholderia sp. (strain RASC), this protein is 2,4-dinitrotoluene dioxygenase system, small oxygenase component.